Reading from the N-terminus, the 279-residue chain is 3-methyl-2-oxobutanoate hydroxymethyltransferase (279 aa).

Residues Asp44 and Asp83 each coordinate Mg(2+). 3-methyl-2-oxobutanoate-binding positions include 44–45, Asp83, and Lys113; that span reads DS. Position 115 (Glu115) interacts with Mg(2+). Glu182 acts as the Proton acceptor in catalysis.

The protein belongs to the PanB family. Homodecamer; pentamer of dimers. Mg(2+) is required as a cofactor.

It localises to the cytoplasm. The catalysed reaction is 3-methyl-2-oxobutanoate + (6R)-5,10-methylene-5,6,7,8-tetrahydrofolate + H2O = 2-dehydropantoate + (6S)-5,6,7,8-tetrahydrofolate. The protein operates within cofactor biosynthesis; (R)-pantothenate biosynthesis; (R)-pantoate from 3-methyl-2-oxobutanoate: step 1/2. Its function is as follows. Catalyzes the reversible reaction in which hydroxymethyl group from 5,10-methylenetetrahydrofolate is transferred onto alpha-ketoisovalerate to form ketopantoate. The polypeptide is 3-methyl-2-oxobutanoate hydroxymethyltransferase (Dehalococcoides mccartyi (strain ATCC BAA-2100 / JCM 16839 / KCTC 5957 / BAV1)).